A 627-amino-acid chain; its full sequence is MRLSWVIGGAQGTGIDTAANIFGNAVASAGYYIYGNREYYSNIKGRHSYFSLTISDKRVRSNTQKIDILVSFDAETVFQHFYDVKDILIYNKAVETTKIDAVQSMEPELAERIKDFLTKQGYETTVKGALEYASKNNVTLIPVNYDEIAKKVADEMKVPLSVTERVKNIVGITISYKLLGLDVNYLIEAINSTFKQDLYRKMNELAVKDSYDIVESRYNLKPSSKERRRFWLDGNTAVAIGKIYGGVRFQSYYPITPASDESVYIEAHQDVLMEDPITGDKKKGTIVVVQAEDELAAINMAIGAALTGVRAATATSGPGFSLMVEGLGWAGMNEVPVVITYYIRGGPSTGLPTRTAQSDLIFPIFAGHGEFPKIVLASGDHAEAFKDAIWALNLAEKYQTPVIHLVEKTLANSYSTIPYEELELDKLKAERGKIVESGDISYKRFKFTEDGISPRAFLGKATMYYTGDEHNEEGHISEDVVNRTMMYEKRMKKLEVADKEIPEESRVKIYGDLNSRNLIITWGSPTGVLRDILEESNFDFTLLQIRMFSPFPKNLVSKLMEGRDKIITVEGNYLAQTSLLVKMYTGKDVTNSILKWNGRPFLRDELEEALIKVIKDGEKRVVLNGGI.

Positions 253–257 match the YPITP motif motif; the sequence is YPITP. T256 and R344 together coordinate substrate.

Heterodimer composed of an alpha and a beta subunit.

The enzyme catalyses a 2-oxocarboxylate + 2 oxidized [2Fe-2S]-[ferredoxin] + CoA = an acyl-CoA + 2 reduced [2Fe-2S]-[ferredoxin] + CO2 + H(+). Its activity is regulated as follows. Inhibited by low concentration of 4-fluoro-7-nitrobenzofurazan (NBD-F). Its function is as follows. Catalyzes the coenzyme A-dependent oxidative decarboxylation of different 2-oxoacids such as 2-oxoglutarate, pyruvate and 2-oxobutyrate to form their CoA derivatives. This Sulfurisphaera tokodaii (strain DSM 16993 / JCM 10545 / NBRC 100140 / 7) (Sulfolobus tokodaii) protein is 2-oxoacid:ferredoxin oxidoreductase 1, subunit alpha.